The chain runs to 379 residues: EP300-interacting inhibitor of differentiation 3 (379 aa).

Residues 32 to 58 (LKQVEEEEEVEALKVEVAAASDTESDT) adopt a coiled-coil conformation.

The protein belongs to the NSE4 family. In terms of assembly, component of the SMC5-SMC6 complex which consists at least of SMC5, SMC6, NSMCE2, NSMCE1, NSMCE4A or EID3 and NSMCE3. NSMCE1, NSMCE4A or EID3 and NSMCE3 probably form a subcomplex that bridges the head domains of the SMC5:SMC6 heterodimer. Homodimer, and heterodimer with EID2. Interacts with the C-terminal region of CREBBP.

It localises to the nucleus. The protein localises to the cytoplasm. The protein resides in the chromosome. Its subcellular location is the telomere. Its function is as follows. Tissue-specific component of the SMC5-SMC6 complex, a complex involved in repair of DNA double-strand breaks by homologous recombination. The complex may promote sister chromatid homologous recombination by recruiting the SMC1-SMC3 cohesin complex to double-strand breaks. The complex is required for telomere maintenance via recombination and mediates sumoylation of shelterin complex (telosome) components. Acts as a repressor of nuclear receptor-dependent transcription possibly by interfering with CREBBP-dependent coactivation. May function as a coinhibitor of other CREBBP/EP300-dependent transcription factors. This chain is EP300-interacting inhibitor of differentiation 3, found in Bos taurus (Bovine).